Here is a 161-residue protein sequence, read N- to C-terminus: Probable chemoreceptor glutamine deamidase CheD (161 aa).

It belongs to the CheD family.

The catalysed reaction is L-glutaminyl-[protein] + H2O = L-glutamyl-[protein] + NH4(+). Probably deamidates glutamine residues to glutamate on methyl-accepting chemotaxis receptors (MCPs), playing an important role in chemotaxis. The protein is Probable chemoreceptor glutamine deamidase CheD of Syntrophomonas wolfei subsp. wolfei (strain DSM 2245B / Goettingen).